We begin with the raw amino-acid sequence, 709 residues long: Elongation factor G (709 aa).

In terms of domain architecture, tr-type G spans 10 to 286 (NKVRNIGIMA…AVVDFLPSPL (277 aa)). GTP contacts are provided by residues 19 to 26 (AHIDAGKT), 83 to 87 (DTPGH), and 137 to 140 (NKMD).

Belongs to the TRAFAC class translation factor GTPase superfamily. Classic translation factor GTPase family. EF-G/EF-2 subfamily.

Its subcellular location is the cytoplasm. Its function is as follows. Catalyzes the GTP-dependent ribosomal translocation step during translation elongation. During this step, the ribosome changes from the pre-translocational (PRE) to the post-translocational (POST) state as the newly formed A-site-bound peptidyl-tRNA and P-site-bound deacylated tRNA move to the P and E sites, respectively. Catalyzes the coordinated movement of the two tRNA molecules, the mRNA and conformational changes in the ribosome. This is Elongation factor G from Corynebacterium glutamicum (strain R).